Reading from the N-terminus, the 185-residue chain is Guanosine deaminase (185 aa).

The 115-residue stretch at 28–142 folds into the CMP/dCMP-type deaminase domain; the sequence is DSDHKFLTQA…AAIAIGFDDF (115 aa). A Zn(2+)-binding site is contributed by His80. Residue Glu82 is the Proton donor of the active site. Zn(2+) is bound by residues Cys110 and Cys113.

It belongs to the cytidine and deoxycytidylate deaminase family. Expressed in roots, leaves, flowers and siliques.

It is found in the cytoplasm. The protein localises to the nucleus. It carries out the reaction guanosine + H2O + H(+) = xanthosine + NH4(+). Its function is as follows. Catalyzes the hydrolytic deamination of guanosine, producing xanthosine and ammonia. Deaminates exclusively guanosine and 2'-deoxyguanosine but no other aminated purines, pyrimidines, or pterines. Deamination of guanosine by GSDA is the only source of xanthosine production in Arabidopsis. The polypeptide is Guanosine deaminase (Arabidopsis thaliana (Mouse-ear cress)).